Consider the following 66-residue polypeptide: Small ribosomal subunit protein bS21B (66 aa).

The disordered stretch occupies residues 38-66; the sequence is YVKPTQKRKIAKKAAISKAKKEARRSYSY.

This sequence belongs to the bacterial ribosomal protein bS21 family.

This is Small ribosomal subunit protein bS21B from Francisella tularensis subsp. tularensis (strain SCHU S4 / Schu 4).